A 357-amino-acid polypeptide reads, in one-letter code: Protein pelota homolog (357 aa).

Belongs to the eukaryotic release factor 1 family. Pelota subfamily. Monomer. Requires a divalent metal cation as cofactor.

The protein resides in the cytoplasm. May function in recognizing stalled ribosomes, interact with stem-loop structures in stalled mRNA molecules, and effect endonucleolytic cleavage of the mRNA. May play a role in the release non-functional ribosomes and degradation of damaged mRNAs. Has endoribonuclease activity. The protein is Protein pelota homolog of Thermococcus onnurineus (strain NA1).